A 70-amino-acid polypeptide reads, in one-letter code: UPF0270 protein VP2791 (70 aa).

The protein belongs to the UPF0270 family.

The polypeptide is UPF0270 protein VP2791 (Vibrio parahaemolyticus serotype O3:K6 (strain RIMD 2210633)).